The following is a 440-amino-acid chain: Putative short-chain fatty acid transporter (440 aa).

The Periplasmic portion of the chain corresponds to 1 to 19 (MIGRISRFMTRFVSRWLPD). Residues 20–40 (PLIFAMLLTLLTFVIALWLTP) traverse the membrane as a helical segment. At 41–53 (QTPISMVKMWGDG) the chain is on the cytoplasmic side. The chain crosses the membrane as a helical span at residues 54-74 (FWNLLAFGMQMALIIVTGHAL). The Periplasmic segment spans residues 75-102 (ASSAPVKSLLRTAASAAKTPVQGVMLVT). The chain crosses the membrane as a helical span at residues 103-123 (FFGSVACVINWGFGLVVGAMF). The Cytoplasmic portion of the chain corresponds to 124–137 (AREVARRVPGSDYP). The next 2 membrane-spanning stretches (helical) occupy residues 138–158 (LLIA…SGSM) and 159–179 (PLLA…IPVG). A topological domain (cytoplasmic) is located at residue aspartate 180. The chain crosses the membrane as a helical span at residues 181-201 (TLFSGFNIFITVALIVVMPFI). Residues 202–244 (TRMMMPKPSDVVSIDPKLLMEEADFQKQLPKDAPPSERLEESR) are Periplasmic-facing. The next 2 membrane-spanning stretches (helical) occupy residues 245-265 (ILTL…FSEH) and 266-286 (GFNI…LLLH). At 287 to 313 (KTPMAYMRAISAAARSTAGILVQFPFY) the chain is on the periplasmic side. The helical transmembrane segment at 314–334 (AGIQLMMEHSGLGGLITEFFI) threads the bilayer. Topologically, residues 335-351 (NVANKDTFPVMTFFSSA) are cytoplasmic. A helical membrane pass occupies residues 352-372 (LINFAVPSGGGHWVIQGPFVI). Residues 373–394 (PAAQALGADLGKSVMAIAYGEQ) are Periplasmic-facing. Residues 395–415 (WMNMAQPFWALPALAIAGLGV) form a helical membrane-spanning segment. Residues 416–419 (RDIM) are Cytoplasmic-facing. A helical transmembrane segment spans residues 420–440 (GYCITALLFSGVIFVIGLTLF).

The protein resides in the cell inner membrane. In terms of biological role, may be responsible for the uptake of short-chain fatty acids. This is Putative short-chain fatty acid transporter (atoE) from Escherichia coli (strain K12).